Consider the following 199-residue polypeptide: dITP/XTP pyrophosphatase (199 aa).

7–12 (SNNRGK) lines the substrate pocket. Mg(2+)-binding residues include aspartate 39 and aspartate 68. The Proton acceptor role is filled by aspartate 68. Residues alanine 69, 154 to 157 (FGFD), lysine 177, and 182 to 183 (HR) contribute to the substrate site.

This sequence belongs to the HAM1 NTPase family. Homodimer. Mg(2+) is required as a cofactor.

It catalyses the reaction XTP + H2O = XMP + diphosphate + H(+). The enzyme catalyses dITP + H2O = dIMP + diphosphate + H(+). The catalysed reaction is ITP + H2O = IMP + diphosphate + H(+). Pyrophosphatase that catalyzes the hydrolysis of nucleoside triphosphates to their monophosphate derivatives, with a high preference for the non-canonical purine nucleotides XTP (xanthosine triphosphate), dITP (deoxyinosine triphosphate) and ITP. Seems to function as a house-cleaning enzyme that removes non-canonical purine nucleotides from the nucleotide pool, thus preventing their incorporation into DNA/RNA and avoiding chromosomal lesions. This is dITP/XTP pyrophosphatase from Paracidovorax citrulli (strain AAC00-1) (Acidovorax citrulli).